The following is a 418-amino-acid chain: Tyrosine--tRNA ligase (418 aa).

Residue Y34 coordinates L-tyrosine. The short motif at 39–48 (PTADSLHLGH) is the 'HIGH' region element. L-tyrosine contacts are provided by Y169 and Q173. A 'KMSKS' region motif is present at residues 229 to 233 (KFGKS). K232 serves as a coordination point for ATP. An S4 RNA-binding domain is found at 352–418 (HNIVELLVTA…GKKKYFVLTY (67 aa)).

This sequence belongs to the class-I aminoacyl-tRNA synthetase family. TyrS type 1 subfamily. Homodimer.

It is found in the cytoplasm. It carries out the reaction tRNA(Tyr) + L-tyrosine + ATP = L-tyrosyl-tRNA(Tyr) + AMP + diphosphate + H(+). Functionally, catalyzes the attachment of tyrosine to tRNA(Tyr) in a two-step reaction: tyrosine is first activated by ATP to form Tyr-AMP and then transferred to the acceptor end of tRNA(Tyr). This is Tyrosine--tRNA ligase from Streptococcus mutans serotype c (strain ATCC 700610 / UA159).